The sequence spans 934 residues: Bifunctional uridylyltransferase/uridylyl-removing enzyme (934 aa).

The uridylyltransferase stretch occupies residues methionine 1–serine 379. The uridylyl-removing stretch occupies residues aspartate 380–threonine 736. In terms of domain architecture, HD spans valine 496–methionine 613. ACT domains follow at residues glutamate 737–alanine 818 and valine 848–glutamine 931.

Belongs to the GlnD family. It depends on Mg(2+) as a cofactor.

It carries out the reaction [protein-PII]-L-tyrosine + UTP = [protein-PII]-uridylyl-L-tyrosine + diphosphate. The catalysed reaction is [protein-PII]-uridylyl-L-tyrosine + H2O = [protein-PII]-L-tyrosine + UMP + H(+). Its activity is regulated as follows. Uridylyltransferase (UTase) activity is inhibited by glutamine, while glutamine activates uridylyl-removing (UR) activity. In terms of biological role, modifies, by uridylylation and deuridylylation, the PII regulatory proteins (GlnB and homologs), in response to the nitrogen status of the cell that GlnD senses through the glutamine level. Under low glutamine levels, catalyzes the conversion of the PII proteins and UTP to PII-UMP and PPi, while under higher glutamine levels, GlnD hydrolyzes PII-UMP to PII and UMP (deuridylylation). Thus, controls uridylylation state and activity of the PII proteins, and plays an important role in the regulation of nitrogen assimilation and metabolism. This chain is Bifunctional uridylyltransferase/uridylyl-removing enzyme, found in Brucella suis biovar 1 (strain 1330).